We begin with the raw amino-acid sequence, 377 residues long: uncharacterized protein (377 aa).

Residues 309 to 375 (NIISVDKIKE…ISNLNKKLKK (67 aa)) adopt a coiled-coil conformation.

The protein belongs to the mimivirus L5 family.

This is an uncharacterized protein from Acanthamoeba polyphaga (Amoeba).